A 389-amino-acid chain; its full sequence is Large envelope protein (389 aa).

N-acetylmethionine is present on Met1. A lipid anchor (N-myristoyl glycine; by host) is attached at Gly2. The tract at residues 2-108 (GTNLSVPNPL…PPLRDSHPQA (107 aa)) is pre-S1. Residues 2-163 (GTNLSVPNPL…FSRTGDPAPN (162 aa)) form a pre-S region. Over 2–170 (GTNLSVPNPL…APNMESTTSG (169 aa)) the chain is Virion surface; in external conformation. Residues 2-242 (GTNLSVPNPL…PGYRWMCLRR (241 aa)) are Intravirion; in internal conformation-facing. Residues 74 to 105 (LTTVPAAPPPASTNRQSGRQPTPISPPLRDSH) form a disordered region. Polar residues predominate over residues 85–95 (STNRQSGRQPT). The interval 109–163 (MQWNSTTFHQALLDPRVRGLYFPAGGSSSGTVNPVPTIVSPISSIFSRTGDPAPN) is pre-S2. The helical transmembrane segment at 171–191 (FLGPLLVLQAGFFLLTRILTI) threads the bilayer. Over 192-242 (PQSLDSWWTSLNFLGEAPTCPGQNSQSPTSNHSPTSCPPICPGYRWMCLRR) the chain is Intravirion; in external conformation. A helical membrane pass occupies residues 243–263 (FIIFLFILLLCLIFLLVLLDY). At 264-337 (QGMLPVCPLL…WASVRFSWLS (74 aa)) the chain is on the virion surface side. Asn309 is a glycosylation site (N-linked (GlcNAc...) asparagine; by host). The helical transmembrane segment at 338-358 (LLVPFVQWFAGLSPTVWLSVI) threads the bilayer. Residues 359–364 (WMMWYW) are Intravirion-facing. A helical transmembrane segment spans residues 365 to 387 (GPSLYNILSPFLPLLPIFFCLWV). Over 388–389 (YI) the chain is Virion surface.

It belongs to the orthohepadnavirus major surface antigen family. In its internal form (Li-HBsAg), interacts with the capsid protein and with the isoform S. Interacts with host chaperone CANX. In terms of assembly, associates with host chaperone CANX through its pre-S2 N glycan; this association may be essential for isoform M proper secretion. As to quaternary structure, interacts with isoform L. Interacts with the antigens of satellite virus HDV (HDVAgs); this interaction is required for encapsidation of HDV genomic RNA. Isoform M is N-terminally acetylated by host at a ratio of 90%, and N-glycosylated by host at the pre-S2 region. Post-translationally, myristoylated.

The protein localises to the virion membrane. The large envelope protein exists in two topological conformations, one which is termed 'external' or Le-HBsAg and the other 'internal' or Li-HBsAg. In its external conformation the protein attaches the virus to cell receptors and thereby initiating infection. This interaction determines the species specificity and liver tropism. This attachment induces virion internalization predominantly through caveolin-mediated endocytosis. The large envelope protein also assures fusion between virion membrane and endosomal membrane. In its internal conformation the protein plays a role in virion morphogenesis and mediates the contact with the nucleocapsid like a matrix protein. Functionally, the middle envelope protein plays an important role in the budding of the virion. It is involved in the induction of budding in a nucleocapsid independent way. In this process the majority of envelope proteins bud to form subviral lipoprotein particles of 22 nm of diameter that do not contain a nucleocapsid. In Hepatitis B virus genotype C subtype adr (isolate Japan/A4/1994) (HBV-C), this protein is Large envelope protein.